We begin with the raw amino-acid sequence, 280 residues long: Ribosomal RNA small subunit methyltransferase A (280 aa).

6 residues coordinate S-adenosyl-L-methionine: asparagine 27, leucine 29, glycine 54, glutamate 76, aspartate 102, and asparagine 122.

This sequence belongs to the class I-like SAM-binding methyltransferase superfamily. rRNA adenine N(6)-methyltransferase family. RsmA subfamily.

The protein localises to the cytoplasm. It catalyses the reaction adenosine(1518)/adenosine(1519) in 16S rRNA + 4 S-adenosyl-L-methionine = N(6)-dimethyladenosine(1518)/N(6)-dimethyladenosine(1519) in 16S rRNA + 4 S-adenosyl-L-homocysteine + 4 H(+). Its function is as follows. Specifically dimethylates two adjacent adenosines (A1518 and A1519) in the loop of a conserved hairpin near the 3'-end of 16S rRNA in the 30S particle. May play a critical role in biogenesis of 30S subunits. The protein is Ribosomal RNA small subunit methyltransferase A of Oleidesulfovibrio alaskensis (strain ATCC BAA-1058 / DSM 17464 / G20) (Desulfovibrio alaskensis).